Reading from the N-terminus, the 280-residue chain is MNEIFKTLQIIAKKISEEVKYADFGYTNHQNSTGDTQLKLDVKSDSIIEAEFRKISSVKSLVSEEKEDELVLNENAKFIIAYDPLDGSSLVDVNFAVGSIFGIYENEIKAENLKAAAYIIYGPRLEMVFTDGNAPKFYRLQKDGNFAFINELKLENKGKLNATGATQKNWSQTHRNFIRSLFDEGYRLRYSGAMVADLHQILMKKGGIFSYPATSDHPNGKLRVSFEVLPFAFIYEKAGGATSDGKSQSLFSIKISKIHQTTPCFFGSKYEIERLHEIYG.

Mg(2+) is bound by residues E64, D83, L85, and D86. Residues 86–89, Y190, and K221 each bind substrate; that span reads DGSS. Position 227 (E227) interacts with Mg(2+).

The protein belongs to the FBPase class 1 family. Homotetramer. It depends on Mg(2+) as a cofactor.

The protein localises to the cytoplasm. It catalyses the reaction beta-D-fructose 1,6-bisphosphate + H2O = beta-D-fructose 6-phosphate + phosphate. The protein operates within carbohydrate biosynthesis; gluconeogenesis. The sequence is that of Fructose-1,6-bisphosphatase class 1 from Campylobacter hominis (strain ATCC BAA-381 / DSM 21671 / CCUG 45161 / LMG 19568 / NCTC 13146 / CH001A).